Here is a 163-residue protein sequence, read N- to C-terminus: Retinoic acid receptor responder protein 2 (163 aa).

Positions 1 to 20 (MRRLLIPLALWLGAVGVGVA) are cleaved as a signal peptide. Intrachain disulfides connect Cys-77/Cys-87, Cys-98/Cys-117, and Cys-101/Cys-135. Residues 158-163 (KALPRS) constitute a propeptide that is removed on maturation.

Secreted in an inactive precursor form, prochemerin, which is proteolytically processed by a variety of extracellular proteases to generate forms with differing levels of bioactivity. For example, the removal of six amino acids results in chemerin-157, which exhibits the highest activity, while removal of seven amino acids results in chemerin-156 which has slightly less activity. Some proteases are able to cleave at more than one site and chemerin forms may be sequentially processed by different enzymes to modulate activity levels. The coordinated expression and activity of chemerin-modifying enzymes is essential for regulating its bioactivation, inactivation and, consequently, biological function. Cathepsin G cleaves seven C-terminal amino acids from prochemerin (chemerin-156), elastase is able to cleave six (chemerin-157), eight (chemerin-155) or eleven (chemerin-152), plasmin cleaves five amino acids (chemerin-158), and tryptase cleaves five (chemerin-158) or eight (chemerin-155). Multiple cleavages might be required to fully activate chemerin, with an initial tryptase cleavage resulting in chemerin with low activity (chemerin-158), and a second cleavage by carboxypeptidase N or B producing highly active chemerin (chemerin-157).

It localises to the secreted. Functionally, adipocyte-secreted protein (adipokine) that regulates adipogenesis, metabolism and inflammation through activation of the chemokine-like receptor 1 (CMKLR1). Also acts as a ligand for CMKLR2. Can also bind to C-C chemokine receptor-like 2 (CCRL2), but with a lower affinity than it does to CMKLR1 or CMKLR2. Positively regulates adipocyte differentiation, modulates the expression of adipocyte genes involved in lipid and glucose metabolism and might play a role in angiogenesis, a process essential for the expansion of white adipose tissue. Also acts as a pro-inflammatory adipokine, causing an increase in secretion of pro-inflammatory and prodiabetic adipokines, which further impair adipose tissue metabolic function and have negative systemic effects including impaired insulin sensitivity, altered glucose and lipid metabolism, and a decrease in vascular function in other tissues. Can have both pro- and anti-inflammatory properties depending on the modality of enzymatic cleavage by different classes of proteases. Acts as a chemotactic factor for leukocyte populations expressing CMKLR1, particularly immature plasmacytoid dendritic cells, but also immature myeloid DCs, macrophages and natural killer cells. Exerts an anti-inflammatory role by preventing TNF/TNFA-induced VCAM1 expression and monocytes adhesion in vascular endothelial cells. The effect is mediated via inhibiting activation of NF-kappa-B and CRK/p38 through stimulation of AKT1/NOS3 signaling and nitric oxide production. Exhibits an antimicrobial function in the skin. This Pongo abelii (Sumatran orangutan) protein is Retinoic acid receptor responder protein 2 (RARRES2).